Consider the following 44-residue polypeptide: Large ribosomal subunit protein P2 (44 aa).

Met1 is modified (N-acetylmethionine). Residues Ser17 and Ser19 each carry the phosphoserine modification. An N6-acetyllysine; alternate modification is found at Lys21. At Lys21 the chain carries N6-succinyllysine; alternate.

Belongs to the eukaryotic ribosomal protein P1/P2 family. As to quaternary structure, heterodimer with RPLP1 at the lateral ribosomal stalk of the large ribosomal subunit. Post-translationally, phosphorylated.

Its function is as follows. Plays an important role in the elongation step of protein synthesis. The chain is Large ribosomal subunit protein P2 (RPLP2) from Oryctolagus cuniculus (Rabbit).